Consider the following 342-residue polypeptide: Anthranilate phosphoribosyltransferase (342 aa).

Residues G84, 87–88 (GD), T92, 94–97 (NIST), 112–120 (KHGGRSVSS), and S124 contribute to the 5-phospho-alpha-D-ribose 1-diphosphate site. Anthranilate is bound at residue G84. S96 lines the Mg(2+) pocket. R170 is a binding site for anthranilate. Positions 229 and 230 each coordinate Mg(2+).

This sequence belongs to the anthranilate phosphoribosyltransferase family. In terms of assembly, homodimer. Requires Mg(2+) as cofactor.

It catalyses the reaction N-(5-phospho-beta-D-ribosyl)anthranilate + diphosphate = 5-phospho-alpha-D-ribose 1-diphosphate + anthranilate. The protein operates within amino-acid biosynthesis; L-tryptophan biosynthesis; L-tryptophan from chorismate: step 2/5. Its function is as follows. Catalyzes the transfer of the phosphoribosyl group of 5-phosphorylribose-1-pyrophosphate (PRPP) to anthranilate to yield N-(5'-phosphoribosyl)-anthranilate (PRA). This Verminephrobacter eiseniae (strain EF01-2) protein is Anthranilate phosphoribosyltransferase.